A 152-amino-acid chain; its full sequence is Small ribosomal subunit protein uS5 (152 aa).

Positions 14-77 (FEEVIVNIGR…DDAHKNLVKV (64 aa)) constitute an S5 DRBM domain.

This sequence belongs to the universal ribosomal protein uS5 family. In terms of assembly, part of the 30S ribosomal subunit. Contacts proteins S4 and S8.

Its function is as follows. With S4 and S12 plays an important role in translational accuracy. Functionally, located at the back of the 30S subunit body where it stabilizes the conformation of the head with respect to the body. The protein is Small ribosomal subunit protein uS5 of Sulfurovum sp. (strain NBC37-1).